The sequence spans 89 residues: Small ribosomal subunit protein uS17 (89 aa).

Belongs to the universal ribosomal protein uS17 family. Part of the 30S ribosomal subunit.

In terms of biological role, one of the primary rRNA binding proteins, it binds specifically to the 5'-end of 16S ribosomal RNA. The sequence is that of Small ribosomal subunit protein uS17 from Coxiella burnetii (strain Dugway 5J108-111).